A 319-amino-acid polypeptide reads, in one-letter code: Ribonucleoside-diphosphate reductase small chain (319 aa).

3 residues coordinate Fe cation: Asp70, Glu101, and His104. The active site involves Tyr108. Positions 163, 197, and 200 each coordinate Fe cation. Residues 313–319 form an interaction with R1 region; sequence FSLDVDF.

Belongs to the ribonucleoside diphosphate reductase small chain family. As to quaternary structure, interacts with RNR1/OPG080 subunit. Can interact with host RNR1 supunit. The cofactor is Fe cation.

The catalysed reaction is a 2'-deoxyribonucleoside 5'-diphosphate + [thioredoxin]-disulfide + H2O = a ribonucleoside 5'-diphosphate + [thioredoxin]-dithiol. Ribonucleoside-diphosphate reductase holoenzyme provides the precursors necessary for viral DNA synthesis. Allows virus growth in non-dividing cells. Catalyzes the biosynthesis of deoxyribonucleotides from the corresponding ribonucleotides. In Vaccinia virus (strain L-IVP) (VACV), this protein is Ribonucleoside-diphosphate reductase small chain (OPG048).